Here is a 284-residue protein sequence, read N- to C-terminus: Bifunctional protein FolD (284 aa).

NADP(+) contacts are provided by residues 164-166, Ser-189, and Ile-230; that span reads GRG.

It belongs to the tetrahydrofolate dehydrogenase/cyclohydrolase family. As to quaternary structure, homodimer.

The enzyme catalyses (6R)-5,10-methylene-5,6,7,8-tetrahydrofolate + NADP(+) = (6R)-5,10-methenyltetrahydrofolate + NADPH. It catalyses the reaction (6R)-5,10-methenyltetrahydrofolate + H2O = (6R)-10-formyltetrahydrofolate + H(+). Its pathway is one-carbon metabolism; tetrahydrofolate interconversion. In terms of biological role, catalyzes the oxidation of 5,10-methylenetetrahydrofolate to 5,10-methenyltetrahydrofolate and then the hydrolysis of 5,10-methenyltetrahydrofolate to 10-formyltetrahydrofolate. In Desulforamulus reducens (strain ATCC BAA-1160 / DSM 100696 / MI-1) (Desulfotomaculum reducens), this protein is Bifunctional protein FolD.